The primary structure comprises 272 residues: uncharacterized protein (272 aa).

2 stretches are compositionally biased toward basic and acidic residues: residues 136 to 156 and 231 to 240; these read VRRE…HIDI and GCKESRRNEP. Disordered stretches follow at residues 136-157 and 174-272; these read VRRE…IDIH and VKPK…WAAF. Polar residues predominate over residues 243-252; the sequence is DLSQLKKNLP. The segment covering 253-272 has biased composition (low complexity); it reads STAGSGSSKSTGAASGWAAF.

This is an uncharacterized protein from Arabidopsis thaliana (Mouse-ear cress).